Consider the following 279-residue polypeptide: MTVTLRPPSSVRRSAWVKNPKLKPFLPYVVCLPIFLAIWQVISAILGQDRLPGPINVVANTWMPYIVEPFFDNGGTSKGLGLQILISLQRVAIGYLLAACTGILVGGVLGMSKFLGKGLDPVIQVLRTVPPLAWFPISLMVFQDANTSAIFVIFITAIWPIIINTAVGINQIPDDYNNVARVLKLSKKDYILNILIPSTVPYVFAGLRIAVGLAWLAIVAAEMLKADGGIGYFIWDAYNAGGDGSSSQIILAIFYVGLVGLSLDRLVAWVGRLVSPVSR.

5 helical membrane passes run 25 to 45, 91 to 111, 149 to 169, 200 to 220, and 249 to 269; these read FLPY…ISAI, VAIG…VLGM, AIFV…AVGI, VPYV…AIVA, and IILA…LVAW. Residues 84 to 267 enclose the ABC transmembrane type-1 domain; it reads ILISLQRVAI…LVGLSLDRLV (184 aa).

Belongs to the binding-protein-dependent transport system permease family. CysTW subfamily. In terms of assembly, the complex is composed of two ATP-binding proteins (NrtC and NrtD), two transmembrane proteins (NrtB) and a solute-binding protein (NrtA).

It localises to the cell inner membrane. In terms of biological role, part of the ABC transporter complex NrtABCD involved in nitrate uptake. The complex is probably also involved in nitrite transport. Probably responsible for the translocation of the substrate across the membrane. The protein is Nitrate import permease protein NrtB of Synechococcus elongatus (strain ATCC 33912 / PCC 7942 / FACHB-805) (Anacystis nidulans R2).